The sequence spans 368 residues: MAVVDVSEELKSLSSTMESIEAVLDLDKLRADIAVLEEQAAAPSLWDDPEAAQKITSKLSHLQAEVRKAEALRGRIDDLSVLFEMAEEEDDPDTRAEAESELTAVKKALDEMEVRTLLSGEYDSREALVNIRAEAGGVDAADFAEKLQRMYLRWAEQRGYKTEIYETSYAEEAGIKSTTFAVQVPYAYGTLSVEQGTHRLVRISPFDNQGRRQTSFAGVEILPVVETTDHIEIDESELRVDVYRSSGPGGQGVNTTDSAVRLTHLPTGIVVSCQNERSQIQNKASAMNVLQAKLLDRRRQEEQAKMDALKGDGGNSWGNQMRSYVLHPYQMVKDLRTEYEVGNPEAVFNGEIEGFLEAGIRWRKQQEK.

The residue at position 251 (Gln-251) is an N5-methylglutamine.

The protein belongs to the prokaryotic/mitochondrial release factor family. Post-translationally, methylated by PrmC. Methylation increases the termination efficiency of RF2.

It is found in the cytoplasm. In terms of biological role, peptide chain release factor 2 directs the termination of translation in response to the peptide chain termination codons UGA and UAA. This chain is Peptide chain release factor 2, found in Streptomyces avermitilis (strain ATCC 31267 / DSM 46492 / JCM 5070 / NBRC 14893 / NCIMB 12804 / NRRL 8165 / MA-4680).